The primary structure comprises 82 residues: Putative membrane protein insertion efficiency factor (82 aa).

Belongs to the UPF0161 family.

Its subcellular location is the cell inner membrane. In terms of biological role, could be involved in insertion of integral membrane proteins into the membrane. The polypeptide is Putative membrane protein insertion efficiency factor (Synechococcus elongatus (strain ATCC 33912 / PCC 7942 / FACHB-805) (Anacystis nidulans R2)).